We begin with the raw amino-acid sequence, 193 residues long: dCTP deaminase (193 aa).

Residues 110–115, Asp-128, 136–138, Tyr-171, Lys-178, and Gln-182 contribute to the dCTP site; these read RSSLAR and VLE. Glu-138 functions as the Proton donor/acceptor in the catalytic mechanism. Residues 169–193 are disordered; that stretch reads RPYNRRQDAKYRDQQGAVASRIDKD.

The protein belongs to the dCTP deaminase family. As to quaternary structure, homotrimer.

The catalysed reaction is dCTP + H2O + H(+) = dUTP + NH4(+). The protein operates within pyrimidine metabolism; dUMP biosynthesis; dUMP from dCTP (dUTP route): step 1/2. Its function is as follows. Catalyzes the deamination of dCTP to dUTP. This Salmonella paratyphi B (strain ATCC BAA-1250 / SPB7) protein is dCTP deaminase.